Reading from the N-terminus, the 150-residue chain is Small ribosomal subunit protein uS11y (150 aa).

S19 is subject to Phosphoserine.

The protein belongs to the universal ribosomal protein uS11 family.

The protein resides in the cytoplasm. The sequence is that of Small ribosomal subunit protein uS11y (RPS14B) from Arabidopsis thaliana (Mouse-ear cress).